We begin with the raw amino-acid sequence, 117 residues long: Large ribosomal subunit protein bL17 (117 aa).

It belongs to the bacterial ribosomal protein bL17 family. As to quaternary structure, part of the 50S ribosomal subunit. Contacts protein L32.

This Exiguobacterium sp. (strain ATCC BAA-1283 / AT1b) protein is Large ribosomal subunit protein bL17.